A 303-amino-acid chain; its full sequence is 4-diphosphocytidyl-2-C-methyl-D-erythritol kinase (303 aa).

Lys-18 is an active-site residue. Residue 111-121 (PVASGIGGGSA) coordinates ATP. Residue Asp-153 is part of the active site.

It belongs to the GHMP kinase family. IspE subfamily.

It carries out the reaction 4-CDP-2-C-methyl-D-erythritol + ATP = 4-CDP-2-C-methyl-D-erythritol 2-phosphate + ADP + H(+). Its pathway is isoprenoid biosynthesis; isopentenyl diphosphate biosynthesis via DXP pathway; isopentenyl diphosphate from 1-deoxy-D-xylulose 5-phosphate: step 3/6. In terms of biological role, catalyzes the phosphorylation of the position 2 hydroxy group of 4-diphosphocytidyl-2C-methyl-D-erythritol. This chain is 4-diphosphocytidyl-2-C-methyl-D-erythritol kinase, found in Sinorhizobium medicae (strain WSM419) (Ensifer medicae).